A 257-amino-acid polypeptide reads, in one-letter code: Regulator of G-protein signaling 7-binding protein (257 aa).

Disordered regions lie at residues 1–45 (MSSA…SAHK) and 174–196 (ETPALEDSSSSPVDSQQHSWQVS). A compositionally biased stretch (basic and acidic residues) spans 32-45 (DWERRGSGSESAHK). Residues 180–192 (DSSSSPVDSQQHS) show a composition bias toward low complexity. The Nuclear localization signal signature appears at 242–247 (RRRKRR). Residues C252 and C253 are each lipidated (S-palmitoyl cysteine).

This sequence belongs to the RGS7BP/RGS9BP family. As to quaternary structure, interacts with 'R7' family proteins RGS6, RGS7, RGS9 and RGS11. Component of some R7-Gbeta5 complex composed of some R7 protein (RGS6, RGS7, RGS9 or RGS11), Gbeta5 (GNB5) and RGS7BP. Post-translationally, palmitoylated. Undergoes rapid palmitoylation turnover. De novo and turnover palmitoylation are both mediated by ZDHHC2. Palmitoylation regulates the cell membrane and nuclear shuttling and the regulation of GPCR signaling. Upon depalmitoylation, it is targeted from the plasma membrane into the nucleus. GPCR signaling inhibits depalmitoylation and promotes localization to the plasma membrane.

It localises to the nucleus. Its subcellular location is the cytoplasm. It is found in the cell membrane. Regulator of G protein-coupled receptor (GPCR) signaling. Regulatory subunit of the R7-Gbeta5 complexes that acts by controlling the subcellular location of the R7-Gbeta5 complexes. When palmitoylated, it targets the R7-Gbeta5 complexes to the plasma membrane, leading to inhibit G protein alpha subunits. When it is unpalmitoylated, the R7-Gbeta5 complexes undergo a nuclear/cytoplasmic shuttling. May also act by controlling the proteolytic stability of R7 proteins, probably by protecting them from degradation. The polypeptide is Regulator of G-protein signaling 7-binding protein (RGS7BP) (Homo sapiens (Human)).